We begin with the raw amino-acid sequence, 269 residues long: Subtilisin Savinase (269 aa).

Residue Gln2 coordinates Ca(2+). Positions 5–268 constitute a Peptidase S8 domain; the sequence is PWGISRVQAP…SGLVNAEAAT (264 aa). The Charge relay system role is filled by Asp32. Asp40 serves as a coordination point for Ca(2+). His62 (charge relay system) is an active-site residue. The Ca(2+) site is built by Leu73, Asn75, Ile77, Val79, Ala163, Tyr165, and Ala168. The Charge relay system role is filled by Ser215.

Belongs to the peptidase S8 family. It depends on Ca(2+) as a cofactor.

The protein localises to the secreted. It carries out the reaction Hydrolysis of proteins with broad specificity for peptide bonds, and a preference for a large uncharged residue in P1. Hydrolyzes peptide amides.. Subtilisin is an extracellular alkaline serine protease, it catalyzes the hydrolysis of proteins and peptide amides. In Lederbergia lenta (Bacillus lentus), this protein is Subtilisin Savinase.